The sequence spans 151 residues: Probable calcium-binding protein CML31 (151 aa).

4 consecutive EF-hand domains span residues Ala14–Glu42, Val44–Glu79, Arg84–Asp119, and Gln120–Ala151. Residues Asp20, Asp22, Asp24, Arg26, Glu31, Asp57, Asp59, Asp61, and Glu68 each contribute to the Ca(2+) site. Residues Asp133, Asn135, Asp137, and Glu144 each coordinate Ca(2+).

Potential calcium sensor. This chain is Probable calcium-binding protein CML31 (CML31), found in Oryza sativa subsp. japonica (Rice).